The sequence spans 329 residues: Probable cell division protein WhiA (329 aa).

The segment at residues 275–308 is a DNA-binding region (H-T-H motif); the sequence is SLEELGALADPPLTKDAVAGRIRRLLAMADKRAQ.

This sequence belongs to the WhiA family.

Involved in cell division and chromosome segregation. In Streptomyces avermitilis (strain ATCC 31267 / DSM 46492 / JCM 5070 / NBRC 14893 / NCIMB 12804 / NRRL 8165 / MA-4680), this protein is Probable cell division protein WhiA.